We begin with the raw amino-acid sequence, 479 residues long: Adenosylhomocysteinase (479 aa).

Residues Thr56, Asp133, and Glu199 each coordinate substrate. Residue 200–202 (TTT) participates in NAD(+) binding. Substrate is bound by residues Lys229 and Asp233. NAD(+) contacts are provided by residues Asn234, 263–268 (GYGDVG), Glu286, Asn321, 342–344 (IGH), and Asn390.

It belongs to the adenosylhomocysteinase family. As to quaternary structure, homotetramer. The cofactor is NAD(+).

It carries out the reaction S-adenosyl-L-homocysteine + H2O = L-homocysteine + adenosine. It functions in the pathway amino-acid biosynthesis; L-homocysteine biosynthesis; L-homocysteine from S-adenosyl-L-homocysteine: step 1/1. Functionally, adenosylhomocysteine is a competitive inhibitor of S-adenosyl-L-methionine-dependent methyl transferase reactions; therefore adenosylhomocysteinase may play a key role in the control of methylations via regulation of the intracellular concentration of adenosylhomocysteine. The protein is Adenosylhomocysteinase of Plasmodium chabaudi chabaudi.